We begin with the raw amino-acid sequence, 189 residues long: GTP cyclohydrolase 1 (189 aa).

Residues cysteine 80, histidine 83, and cysteine 152 each coordinate Zn(2+).

Belongs to the GTP cyclohydrolase I family. In terms of assembly, toroid-shaped homodecamer, composed of two pentamers of five dimers.

It carries out the reaction GTP + H2O = 7,8-dihydroneopterin 3'-triphosphate + formate + H(+). The protein operates within cofactor biosynthesis; 7,8-dihydroneopterin triphosphate biosynthesis; 7,8-dihydroneopterin triphosphate from GTP: step 1/1. This is GTP cyclohydrolase 1 from Latilactobacillus sakei subsp. sakei (strain 23K) (Lactobacillus sakei subsp. sakei).